The chain runs to 555 residues: Hdr-like menaquinol oxidoreductase iron-sulfur subunit 2 (555 aa).

4Fe-4S ferredoxin-type domains lie at 82–111 (RSFKLFMDICVRCGACADKCHYYIGTGDPK) and 151–180 (KELYYYAYQCSLCRRCSLFCPYGIDTAEIV). Cys-91, Cys-94, Cys-97, Cys-101, Cys-160, Cys-163, Cys-166, and Cys-170 together coordinate [4Fe-4S] cluster.

In terms of assembly, consists of five subunits: an integral membrane subunit, a cytochrome b-like subunit, a cytochrome c subunit and two iron-sulfur subunits. Requires [4Fe-4S] cluster as cofactor.

It localises to the cell membrane. In terms of biological role, has menaquinol-oxidizing activity. HmeC and HmeD subunits may together mediate electron transfer from menaquinol to an unidentified electron acceptor on the cytoplasmic side of the membrane. This chain is Hdr-like menaquinol oxidoreductase iron-sulfur subunit 2 (hmeD), found in Archaeoglobus fulgidus (strain ATCC 49558 / DSM 4304 / JCM 9628 / NBRC 100126 / VC-16).